The chain runs to 279 residues: Thymidylate synthase (279 aa).

DUMP is bound at residue Arg-29. A (6R)-5,10-methylene-5,6,7,8-tetrahydrofolate-binding site is contributed by His-59. 134–135 is a dUMP binding site; it reads RR. Cys-154 (nucleophile) is an active-site residue. Residues 181–184, Asn-192, and 222–224 each bind dUMP; these read RSAD and HIY. Asp-184 contributes to the (6R)-5,10-methylene-5,6,7,8-tetrahydrofolate binding site. Ala-278 serves as a coordination point for (6R)-5,10-methylene-5,6,7,8-tetrahydrofolate.

Belongs to the thymidylate synthase family. Bacterial-type ThyA subfamily. In terms of assembly, homodimer.

The protein localises to the cytoplasm. The enzyme catalyses dUMP + (6R)-5,10-methylene-5,6,7,8-tetrahydrofolate = 7,8-dihydrofolate + dTMP. Its pathway is pyrimidine metabolism; dTTP biosynthesis. In terms of biological role, catalyzes the reductive methylation of 2'-deoxyuridine-5'-monophosphate (dUMP) to 2'-deoxythymidine-5'-monophosphate (dTMP) while utilizing 5,10-methylenetetrahydrofolate (mTHF) as the methyl donor and reductant in the reaction, yielding dihydrofolate (DHF) as a by-product. This enzymatic reaction provides an intracellular de novo source of dTMP, an essential precursor for DNA biosynthesis. This is Thymidylate synthase from Paracidovorax citrulli (strain AAC00-1) (Acidovorax citrulli).